The chain runs to 200 residues: Protein RISC-INTERACTING CLEARING 3'-5' EXORIBONUCLEASE 1 (200 aa).

3 oligomerization regions span residues 35–66 (SKIL…KSEW), 102–127 (KFVT…IVIR), and 166–173 (DSIQSKWD).

This sequence belongs to the RICE family. In terms of assembly, homohexamer with DnaQ-like exonuclease fold in a ring-shaped structure with a central cavity. Component of AGO1 and AGO10-centered RNA-induced silencing complexes (RISC). Interacts with and acts as a cofactor of AGO1 and AGO10. As to expression, ubiquitously expressed throughout development in germinating seeds, cotyledons, leaves and roots of young seedlings and adult plants, stems and inflorescence.

It localises to the cytoplasm. It carries out the reaction Exonucleolytic cleavage in the 3'- to 5'-direction to yield nucleoside 5'-phosphates.. Functionally, 3'-to-5' exoribonuclease (RNase) specifically targeting single-stranded RNAs. Triggers miRNA accumulation in RNA-induced silencing complex (RISC), composed of miRNAs and AGO proteins, by degrading uridylated cleavage fragments. Required during plant growth and development. This Arabidopsis thaliana (Mouse-ear cress) protein is Protein RISC-INTERACTING CLEARING 3'-5' EXORIBONUCLEASE 1.